The chain runs to 74 residues: ATP synthase subunit c (74 aa).

2 helical membrane-spanning segments follow: residues 8-28 and 52-72; these read FIGV…VSNI and IGAG…MLLI.

It belongs to the ATPase C chain family. In terms of assembly, F-type ATPases have 2 components, F(1) - the catalytic core - and F(0) - the membrane proton channel. F(1) has five subunits: alpha(3), beta(3), gamma(1), delta(1), epsilon(1). F(0) has three main subunits: a(1), b(2) and c(10-14). The alpha and beta chains form an alternating ring which encloses part of the gamma chain. F(1) is attached to F(0) by a central stalk formed by the gamma and epsilon chains, while a peripheral stalk is formed by the delta and b chains.

It localises to the cell inner membrane. Its function is as follows. F(1)F(0) ATP synthase produces ATP from ADP in the presence of a proton or sodium gradient. F-type ATPases consist of two structural domains, F(1) containing the extramembraneous catalytic core and F(0) containing the membrane proton channel, linked together by a central stalk and a peripheral stalk. During catalysis, ATP synthesis in the catalytic domain of F(1) is coupled via a rotary mechanism of the central stalk subunits to proton translocation. Functionally, key component of the F(0) channel; it plays a direct role in translocation across the membrane. A homomeric c-ring of between 10-14 subunits forms the central stalk rotor element with the F(1) delta and epsilon subunits. The protein is ATP synthase subunit c of Rickettsia bellii (strain RML369-C).